Consider the following 40-residue polypeptide: Photosystem II reaction center protein J (40 aa).

A helical membrane pass occupies residues isoleucine 8–phenylalanine 28.

The protein belongs to the PsbJ family. As to quaternary structure, PSII is composed of 1 copy each of membrane proteins PsbA, PsbB, PsbC, PsbD, PsbE, PsbF, PsbH, PsbI, PsbJ, PsbK, PsbL, PsbM, PsbT, PsbX, PsbY, PsbZ, Psb30/Ycf12, at least 3 peripheral proteins of the oxygen-evolving complex and a large number of cofactors. It forms dimeric complexes.

It is found in the plastid. Its subcellular location is the chloroplast thylakoid membrane. Functionally, one of the components of the core complex of photosystem II (PSII). PSII is a light-driven water:plastoquinone oxidoreductase that uses light energy to abstract electrons from H(2)O, generating O(2) and a proton gradient subsequently used for ATP formation. It consists of a core antenna complex that captures photons, and an electron transfer chain that converts photonic excitation into a charge separation. In Ginkgo biloba (Ginkgo), this protein is Photosystem II reaction center protein J.